The primary structure comprises 374 residues: Lipopolysaccharide glucosyltransferase WaaG (374 aa).

Positions 15 and 19 each coordinate UDP-alpha-D-glucose. A membrane-interacting region region spans residues 103-132 (YAEKVAQEKGFLYRLTSRYRHYAAFERATF). UDP-alpha-D-glucose contacts are provided by R173, R208, K209, R261, E281, A283, G284, I285, V286, and E289.

Belongs to the glycosyltransferase group 1 family. Glycosyltransferase 4 subfamily.

Its subcellular location is the cell inner membrane. It participates in bacterial outer membrane biogenesis; LPS core biosynthesis. Its activity is regulated as follows. Inhibited by divalent metal ions such as Mg(2+), Mn(2+), Ca(2+), Zn(2+), Co(2+), Ni(2+) and Cu(2+). In terms of biological role, glucosyltransferase involved in the biosynthesis of the core oligosaccharide region of lipopolysaccharide (LPS). Catalyzes the addition of the first outer-core glucose from UDP-glucose to the inner-core heptose II. Cannot use other sugar donors, such as UDP-galactose, UDP-glucuronic acid, UDP-galacuronic acid, GDP-mannose, ADP-glucose and GDP-glucose. In the absence of a lipid acceptor, can slowly hydrolyze UDP-glucose. The sequence is that of Lipopolysaccharide glucosyltransferase WaaG from Escherichia coli (strain K12).